A 142-amino-acid polypeptide reads, in one-letter code: MFMGEFQHNIDSKGRLIVPARFREGLGDRFIVTKGLDNCLFVYPQHEWAEVEQKLKSLPFTRADARAFVRFFFSGATECEVDKQGRILLPNNLREYAKLDKETVVVGVSTRVEIWSKEEWDRYNAQAEASFEQLAENIVDLL.

2 SpoVT-AbrB domains span residues 5 to 47 (EFQH…PQHE) and 76 to 119 (ATEC…SKEE).

This sequence belongs to the MraZ family. Forms oligomers.

It localises to the cytoplasm. Its subcellular location is the nucleoid. The chain is Transcriptional regulator MraZ from Desulforamulus reducens (strain ATCC BAA-1160 / DSM 100696 / MI-1) (Desulfotomaculum reducens).